The primary structure comprises 625 residues: Baeyer-Villiger monooxygenase ATR8 (625 aa).

FAD is bound by residues D112, 120–123 (TWYW), D132, and Y138. 130-132 (QCD) provides a ligand contact to NADP(+). Residues 266-272 (TGATAIQ), 289-290 (RT), and 405-406 (KR) each bind NADP(+).

The protein belongs to the FAD-binding monooxygenase family. FAD serves as cofactor.

The protein operates within mycotoxin biosynthesis. In terms of biological role, baeyer-Villiger monooxygenase; part of the core atranone cluster (CAC) which products are predicted to catalyze most or all steps of mycotoxin atranone synthesis, starting from geranylgeranyl pyrophosphate (GGPP). The initial cyclization of GGPP to dolabellane is probably performed by the terpene cyclase ATR13. The Baeyer-Villiger oxidation near the end of the atranone synthesis, which converts atranones D and E to atranones F and G is predicted to be catalyzed by the monooxygenase ATR8. Of the CAC's other predicted gene products, the reducing PKS ATR6 might synthesize a polyketide chain. This polyketide is probably transferred onto the atranone backbone by the polyketide transferase ATR5. Other predicted CAC products include 4 oxygenases (ATR2, ATR3, ATR4, and ATR14), 3 short-chain reductases (ATR7, ATR9, and ATR10), and a methyltransferase (ATR12). These may all be involved in the various steps of atranone biosynthesis, although their specific roles must await experimental determination. In Stachybotrys chlorohalonatus (strain IBT 40285), this protein is Baeyer-Villiger monooxygenase ATR8.